The following is a 50-amino-acid chain: Small, acid-soluble spore protein K (50 aa).

The interval 1–50 (MVRNKAKGFPNQNNNKFEGEPRAKDDYASKRADGSINSHPQERMRASGRR) is disordered. 2 stretches are compositionally biased toward basic and acidic residues: residues 17 to 33 (FEGE…KRAD) and 40 to 50 (PQERMRASGRR).

Belongs to the SspK family.

The protein localises to the spore core. In Bacillus velezensis (strain DSM 23117 / BGSC 10A6 / LMG 26770 / FZB42) (Bacillus amyloliquefaciens subsp. plantarum), this protein is Small, acid-soluble spore protein K.